The chain runs to 96 residues: Co-chaperonin GroES (96 aa).

Belongs to the GroES chaperonin family. Heptamer of 7 subunits arranged in a ring. Interacts with the chaperonin GroEL.

The protein localises to the cytoplasm. Together with the chaperonin GroEL, plays an essential role in assisting protein folding. The GroEL-GroES system forms a nano-cage that allows encapsulation of the non-native substrate proteins and provides a physical environment optimized to promote and accelerate protein folding. GroES binds to the apical surface of the GroEL ring, thereby capping the opening of the GroEL channel. This chain is Co-chaperonin GroES, found in Polaromonas naphthalenivorans (strain CJ2).